The primary structure comprises 819 residues: Transferrin 2 (819 aa).

A signal peptide spans 1–21 (MASSLVFVALVGALCFTLANA). The 341-residue stretch at 33-373 (MVWCTKSQAE…QYDQYRSERL (341 aa)) folds into the Transferrin-like 1 domain. Intrachain disulfides connect Cys36–Cys78 and Cys46–Cys69. 2 N-linked (GlcNAc...) asparagine glycosylation sites follow: Asn48 and Asn66. Residues Asp93 and Tyr121 each coordinate Fe(3+). 3 cysteine pairs are disulfide-bonded: Cys147–Cys237, Cys190–Cys213, and Cys273–Cys287. Hydrogencarbonate is bound by residues Ala155 and Gly156. Asn187 carries an N-linked (GlcNAc...) asparagine glycan. A Fe(3+)-binding site is contributed by Tyr231. The segment at 325 to 361 (GTRDDQSRQGGQSFNSRNNINDQNAYGQFDNNDPYRT) is disordered. Positions 332–361 (RQGGQSFNSRNNINDQNAYGQFDNNDPYRT) are enriched in polar residues. N-linked (GlcNAc...) asparagine glycosylation is present at Asn388. One can recognise a Transferrin-like 2 domain in the interval 450–796 (MTLCVTSENE…FMRARRITDC (347 aa)). 2 disulfides stabilise this stretch: Cys453/Cys490 and Cys463/Cys481. Residues Asp505 and Tyr533 each coordinate Fe(3+). 4 disulfide bridges follow: Cys557–Cys646, Cys599–Cys621, Cys618–Cys629, and Cys687–Cys701. Hydrogencarbonate-binding residues include Thr559, Ala565, and Gly566. N-linked (GlcNAc...) asparagine glycosylation occurs at Asn720. Cys796 carries the GPI-anchor amidated cysteine lipid modification. The propeptide at 797–819 (YAGASQLALSVGLLLVGSLVAML) is removed in mature form.

The protein belongs to the transferrin family. Forms a complex composed of septa junction proteins Nrx-IV/Nrx, Tsf2/MTf, Cont and Nrg during late embryogenesis.

Its subcellular location is the apicolateral cell membrane. The protein localises to the cell junction. It localises to the septate junction. Iron-binding protein and component of septate junctions that form the paracellular permeability barrier in epithelial tissues. In an iron-dependent manner, required for septate junction assembly during epithelial maturation in embryos and mature septa junctions stability. The polypeptide is Transferrin 2 (Drosophila melanogaster (Fruit fly)).